Reading from the N-terminus, the 284-residue chain is Tropomyosin alpha-1 chain (284 aa).

Residues 1–40 (MDAIKKKMQMLKLDKENALDRAEQAEADKKGAEDKSKQLE) are disordered. A coiled-coil region spans residues 1 to 284 (MDAIKKKMQM…DHALNDMTSI (284 aa)). The span at 12–40 (KLDKENALDRAEQAEADKKGAEDKSKQLE) shows a compositional bias: basic and acidic residues.

It belongs to the tropomyosin family. As to quaternary structure, homodimer. Heterodimer of an alpha (TPM1, TPM3 or TPM4) and a beta (TPM2) chain.

Its subcellular location is the cytoplasm. The protein localises to the cytoskeleton. Binds to actin filaments in muscle and non-muscle cells. Plays a central role, in association with the troponin complex, in the calcium dependent regulation of vertebrate striated muscle contraction. Smooth muscle contraction is regulated by interaction with caldesmon. In non-muscle cells is implicated in stabilizing cytoskeleton actin filaments. The sequence is that of Tropomyosin alpha-1 chain (tpm1) from Rana temporaria (European common frog).